We begin with the raw amino-acid sequence, 431 residues long: Glutamate-1-semialdehyde 2,1-aminomutase (431 aa).

At Lys267 the chain carries N6-(pyridoxal phosphate)lysine.

Belongs to the class-III pyridoxal-phosphate-dependent aminotransferase family. HemL subfamily. In terms of assembly, homodimer. Pyridoxal 5'-phosphate serves as cofactor.

The protein resides in the cytoplasm. It carries out the reaction (S)-4-amino-5-oxopentanoate = 5-aminolevulinate. The protein operates within porphyrin-containing compound metabolism; protoporphyrin-IX biosynthesis; 5-aminolevulinate from L-glutamyl-tRNA(Glu): step 2/2. The chain is Glutamate-1-semialdehyde 2,1-aminomutase from Myxococcus xanthus (strain DK1622).